The sequence spans 180 residues: Large ribosomal subunit protein uL6 (180 aa).

It belongs to the universal ribosomal protein uL6 family. In terms of assembly, part of the 50S ribosomal subunit.

Its function is as follows. This protein binds to the 23S rRNA, and is important in its secondary structure. It is located near the subunit interface in the base of the L7/L12 stalk, and near the tRNA binding site of the peptidyltransferase center. This is Large ribosomal subunit protein uL6 from Clostridium botulinum (strain Alaska E43 / Type E3).